Reading from the N-terminus, the 22-residue chain is Heat shock 70-related protein 1, mitochondrial (22 aa).

This sequence belongs to the heat shock protein 70 family.

The protein localises to the mitochondrion. This Leishmania tarentolae (Sauroleishmania tarentolae) protein is Heat shock 70-related protein 1, mitochondrial.